The primary structure comprises 1875 residues: Neuron navigator 1 (1875 aa).

At methionine 1 the chain carries N-acetylmethionine. The disordered stretch occupies residues 1-63 (MLGSSVKSVQ…GGSGSMAKAS (63 aa)). Phosphoserine is present on residues serine 93 and serine 145. Disordered regions lie at residues 115–230 (SDDM…EERA) and 280–339 (SSLR…VGGS). Threonine 162 carries the phosphothreonine modification. Phosphoserine is present on residues serine 197 and serine 202. A coiled-coil region spans residues 258-283 (ESQRKRTVQNVLDLRQNLEETMSSLR). Residues 280–291 (SSLRGSQVTHSS) show a composition bias toward polar residues. 5 positions are modified to phosphoserine: serine 299, serine 311, serine 315, serine 365, and serine 394. Low complexity predominate over residues 304–318 (PRSVSSLSNRSSPLS). Disordered regions lie at residues 391 to 463 (GYMS…RTDS) and 477 to 783 (SESE…AELP). Composition is skewed to low complexity over residues 414–428 (DESSSISSGLSDASD) and 436–456 (NASSSLNSLPTTPTASRRSST). 4 positions are modified to phosphoserine: serine 455, serine 477, serine 479, and serine 493. Basic and acidic residues predominate over residues 479-489 (SEEKTPKKLEY). Residues 506–522 (ERPESCDDASKGGELKK) show a composition bias toward basic and acidic residues. Serine 531 is subject to Phosphoserine. Residue threonine 537 is modified to Phosphothreonine. At serine 544 the chain carries Phosphoserine. Phosphothreonine is present on threonine 547. Residues 558–569 (GKPEGKATDKGK) show a composition bias toward basic and acidic residues. Threonine 575 carries the post-translational modification Phosphothreonine. Positions 584-594 (AGRDRLSDAKK) are enriched in basic and acidic residues. 2 stretches are compositionally biased toward polar residues: residues 618–638 (GTATVMQTGSSATLSKIQKSS) and 648–658 (RKTSLDVSNSV). At serine 651 the chain carries Phosphoserine. Arginine 690 is modified (omega-N-methylarginine). Composition is skewed to polar residues over residues 696–712 (VSSSIDPSLLSTKQGGL) and 726–735 (GRSTPAPVNQ). Residues 733 to 758 (VNQTDREKEKAKAKAVALDSDNISLK) are a coiled coil. Phosphoserine occurs at positions 752, 756, 762, 799, and 810. The segment covering 753-772 (DNISLKSIGSPESTPKNQAS) has biased composition (polar residues). 2 disordered regions span residues 800–840 (LANL…PLPS) and 893–982 (MSLP…SPPA). Low complexity-rich tracts occupy residues 807-818 (NSNSLDLPSSSD) and 893-902 (MSLPSAFPSS). Residue serine 998 is modified to Phosphoserine. At threonine 1004 the chain carries Phosphothreonine. Residues 1070–1161 (SSAEERMQSE…SEAQAVIQGA (92 aa)) adopt a coiled-coil conformation. At threonine 1168 the chain carries Phosphothreonine. 4 disordered regions span residues 1172-1202 (LRIKRQNSSDSISSLNSITSHSSIGSSKDAD), 1242-1306 (ATPD…KEVS), 1359-1381 (VAPGPSSGCTPGQVPGSSALSSP), and 1808-1841 (KLYHLPPPSVGPHSTASPPEDRTVKDSTPNSLDS). Residue serine 1179 is modified to Phosphoserine. Residues 1179–1198 (SSDSISSLNSITSHSSIGSS) are compositionally biased toward low complexity. Over residues 1244-1259 (PDSSAPSSPKLQHGST) the composition is skewed to polar residues. The span at 1260–1281 (ETASPSIKSSTSSSVGTEVTET) shows a compositional bias: low complexity. At serine 1263 the chain carries Phosphoserine. A coiled-coil region spans residues 1301 to 1360 (EKKEVSELRSELWEKEMKLTDIRLEALNSAHQLDQLRETMHNMQLEVDLLKAENDRLKVA). Over residues 1365–1381 (SGCTPGQVPGSSALSSP) the composition is skewed to polar residues. Serine 1380 carries the phosphoserine modification.

This sequence belongs to the Nav/unc-53 family. As to quaternary structure, interacts with tubulin. As to expression, expressed in heart and brain. Present in brain (at protein level). In adult brain, found almost exclusively in areas of secondary neurogenesis from the hippocampus and the subventricular zone.

Its subcellular location is the cytoplasm. The protein resides in the cytoskeleton. Functionally, may be involved in neuronal migration. In Mus musculus (Mouse), this protein is Neuron navigator 1 (Nav1).